The following is a 352-amino-acid chain: Sortase SrtE1 (352 aa).

Basic and acidic residues-rich tracts occupy residues 1–10 (MTALRPERDS) and 34–45 (RYEESAAGEENR). The interval 1–132 (MTALRPERDS…RQARARKPGA (132 aa)) is disordered. Residues 1 to 139 (MTALRPERDS…PGAAVVASRA (139 aa)) are Cytoplasmic-facing. The interval 15 to 79 (DQGSSYGQPY…TGPIGGGPDG (65 aa)) is required for protein stability. A compositionally biased stretch (gly residues) spans 71-82 (GPIGGGPDGGGR). A compositionally biased stretch (basic residues) spans 83-97 (AARRKAAKRRHGRRG). A helical membrane pass occupies residues 140 to 160 (IGEIFITTGVLMLLFVTYQLW). The Extracellular segment spans residues 161-352 (WTNVRAHAQA…SKGKPDALVS (192 aa)). Catalysis depends on residues histidine 251 and cysteine 320. Arginine 329 (proton donor) is an active-site residue.

It belongs to the bacterial sortase family. Class E subfamily.

Its subcellular location is the cell membrane. The catalysed reaction is The enzyme catalyzes a cell wall sorting reaction in which a surface protein with a sorting signal containing a LPXTG motif is cleaved between the Thr and Gly residue. The resulting threonine carboxyl end of the protein is covalently attached to a pentaglycine cross-bridge of peptidoglycan.. Functionally, transpeptidase that anchors surface proteins to the cell wall. Recognizes both Leu-Ala-x-Thr-Gly and Leu-Pro-x-Thr-Gly, with a preference for the former. Unlike the S.aureus sortase it cleaves not only the Thr-Gly motif but also the Ala-X bond; Ala-Glu and Ala-His bonds are better substrates than the Thr-Gly motif in vitro. Among its possible substrates are the chaplins ChpA, ChpB and ChpC; this enzyme is less important for ChpC attachment than is SrtE2. A double knockout mutant of srtE1 and srtE2 shows a developmental defect in aerial hyphae formation more dramatic than that due to chaplin deletion. The sequence is that of Sortase SrtE1 from Streptomyces coelicolor (strain ATCC BAA-471 / A3(2) / M145).